We begin with the raw amino-acid sequence, 705 residues long: UvrABC system protein C (705 aa).

The GIY-YIG domain maps to 16 to 95 (ETPGVYRFRD…IKQFDPRFNV (80 aa)). Residues 208 to 243 (GRYLRRLEREMQQAAQAQEYERAARLRDDIGALRRA) form the UVR domain. Residues 315 to 332 (AASTGTAGSTVPTTTAGS) show a composition bias toward low complexity. Disordered regions lie at residues 315-335 (AAST…SQGE) and 683-705 (RADA…ETVS).

It belongs to the UvrC family. Interacts with UvrB in an incision complex.

Its subcellular location is the cytoplasm. The UvrABC repair system catalyzes the recognition and processing of DNA lesions. UvrC both incises the 5' and 3' sides of the lesion. The N-terminal half is responsible for the 3' incision and the C-terminal half is responsible for the 5' incision. The sequence is that of UvrABC system protein C from Frankia casuarinae (strain DSM 45818 / CECT 9043 / HFP020203 / CcI3).